We begin with the raw amino-acid sequence, 481 residues long: Glutamyl-tRNA(Gln) amidotransferase subunit A (481 aa).

Residues Lys-76 and Ser-151 each act as charge relay system in the active site. Residue Ser-175 is the Acyl-ester intermediate of the active site.

The protein belongs to the amidase family. GatA subfamily. Heterotrimer of A, B and C subunits.

It carries out the reaction L-glutamyl-tRNA(Gln) + L-glutamine + ATP + H2O = L-glutaminyl-tRNA(Gln) + L-glutamate + ADP + phosphate + H(+). Allows the formation of correctly charged Gln-tRNA(Gln) through the transamidation of misacylated Glu-tRNA(Gln) in organisms which lack glutaminyl-tRNA synthetase. The reaction takes place in the presence of glutamine and ATP through an activated gamma-phospho-Glu-tRNA(Gln). The chain is Glutamyl-tRNA(Gln) amidotransferase subunit A from Neisseria meningitidis serogroup A / serotype 4A (strain DSM 15465 / Z2491).